The sequence spans 197 residues: Thymidine kinase (197 aa).

Residues 9–16 (SAMDAGKT) and 87–90 (DEIH) each bind ATP. E88 (proton acceptor) is an active-site residue. The Zn(2+) site is built by C145, C147, C187, and H190.

The protein belongs to the thymidine kinase family. As to quaternary structure, homotetramer.

Its subcellular location is the cytoplasm. The enzyme catalyses thymidine + ATP = dTMP + ADP + H(+). The sequence is that of Thymidine kinase from Francisella tularensis subsp. holarctica (strain LVS).